Consider the following 362-residue polypeptide: sn-glycerol-3-phosphate import ATP-binding protein UgpC (362 aa).

An ABC transporter domain is found at 4–235 (LSFRNVKKTY…PASTFVAGFI (232 aa)). ATP is bound at residue 37 to 44 (GPSGCGKS).

It belongs to the ABC transporter superfamily. sn-glycerol-3-phosphate importer (TC 3.A.1.1.3) family. In terms of assembly, the complex is composed of two ATP-binding proteins (UgpC), two transmembrane proteins (UgpA and UgpE) and a solute-binding protein (UgpB).

It is found in the cell inner membrane. The enzyme catalyses sn-glycerol 3-phosphate(out) + ATP + H2O = sn-glycerol 3-phosphate(in) + ADP + phosphate + H(+). Its function is as follows. Part of the ABC transporter complex UgpBAEC involved in sn-glycerol-3-phosphate (G3P) import. Responsible for energy coupling to the transport system. The polypeptide is sn-glycerol-3-phosphate import ATP-binding protein UgpC (Bordetella bronchiseptica (strain ATCC BAA-588 / NCTC 13252 / RB50) (Alcaligenes bronchisepticus)).